Consider the following 270-residue polypeptide: uncharacterized protein (270 aa).

Basic and acidic residues-rich tracts occupy residues 1–13 (MSEF…KDLY) and 49–73 (EVER…KEEK). Disordered stretches follow at residues 1 to 76 (MSEF…KQEE), 90 to 111 (STSP…PQTE), and 204 to 270 (KKRR…FRTE). Positions 90–102 (STSPAQEEQGSST) are enriched in polar residues. Over residues 204–216 (KKRRPGQKQRAAK) the composition is skewed to basic residues. The segment covering 218–235 (LALERTKERDTKAREIKK) has biased composition (basic and acidic residues). Positions 236–253 (QLKKKFHKRGGKKNKKKV) are enriched in basic residues.

This is an uncharacterized protein from Saccharomyces cerevisiae (strain ATCC 204508 / S288c) (Baker's yeast).